The sequence spans 576 residues: MWGRAVRRRCPRGLRRGREALLALLALAGLGALLRARSRSGTVDPGPPRTPLPGRHEPVLPRPPLPADALGAHGEAVRLQLQGEELRLQEESVKQHQINIYLSDRISLHRRLPERWNPLCREVKYDYDNLPKTSVVIAFYNEAWSTLLRTVYSVLETSPDILLEEVILVDDYSDREHLKERLANELSQLPKVRLIRASRREGLVRARLLGASAARGEVLTFLDCHCECHEGWLEPLLQRIHEKESAVVCPVIDVIDWNTFEYLGNSGEPQIGGFDWRLVFTWHVVPQRERQSMRSPIDVIRSPTMAGGLFAVSKRYFDYLGSYDTGMEVWGGENLEFSFRIWQCGGTLETHPCSHVGHVFPKQAPYSRSKALANSVRAAEVWMDEFKELYYHRNPQARLEPFGDVTERKKLRAKLQCKDFKWFLDTVYPELHVPEDRPGFFGMLQNRGLRGYCLDYNPPNENHVEGHQVLLYLCHGMGQNQFFEYTTRKEIRYNTRQPEACITVEDGKDTLVMDLCRETVPENQEFILQEDGTLVHKHSRKCVEATEKVLDNGFAPYLRDCTNSDNQRWFFKERMS.

Residues 1–19 (MWGRAVRRRCPRGLRRGRE) lie on the Cytoplasmic side of the membrane. The helical; Signal-anchor for type II membrane protein transmembrane segment at 20–37 (ALLALLALAGLGALLRAR) threads the bilayer. The disordered stretch occupies residues 38–58 (SRSGTVDPGPPRTPLPGRHEP). Residues 38–576 (SRSGTVDPGP…QRWFFKERMS (539 aa)) are Lumenal-facing. 5 disulfides stabilise this stretch: cysteine 120/cysteine 353, cysteine 344/cysteine 417, cysteine 453/cysteine 474, cysteine 501/cysteine 516, and cysteine 542/cysteine 561. The segment at 130 to 239 (LPKTSVVIAF…EGWLEPLLQR (110 aa)) is catalytic subdomain A. Positions 171 and 200 each coordinate substrate. Residues aspartate 223 and histidine 225 each coordinate Mn(2+). The interval 299–361 (VIRSPTMAGG…PCSHVGHVFP (63 aa)) is catalytic subdomain B. Tryptophan 330 provides a ligand contact to substrate. Residue histidine 358 coordinates Mn(2+). Tyrosine 366 serves as a coordination point for substrate. Positions 440-572 (FFGMLQNRGL…NSDNQRWFFK (133 aa)) constitute a Ricin B-type lectin domain.

The protein belongs to the glycosyltransferase 2 family. GalNAc-T subfamily. It depends on Mn(2+) as a cofactor.

The protein resides in the golgi apparatus membrane. It carries out the reaction L-seryl-[protein] + UDP-N-acetyl-alpha-D-galactosamine = a 3-O-[N-acetyl-alpha-D-galactosaminyl]-L-seryl-[protein] + UDP + H(+). The catalysed reaction is L-threonyl-[protein] + UDP-N-acetyl-alpha-D-galactosamine = a 3-O-[N-acetyl-alpha-D-galactosaminyl]-L-threonyl-[protein] + UDP + H(+). Its pathway is protein modification; protein glycosylation. In terms of biological role, catalyzes the initial reaction in O-linked oligosaccharide biosynthesis, the transfer of an N-acetyl-D-galactosamine residue to a serine or threonine residue on the protein receptor. Has activity toward non-glycosylated peptides such as Muc5AC, Muc1a and EA2, and no detectable activity with Muc2 and Muc7. Displays enzymatic activity toward the Gal-NAc-Muc5AC glycopeptide, but no detectable activity to mono-GalNAc-glycosylated Muc1a, Muc2, Muc7 and EA2. May play an important role in the initial step of mucin-type oligosaccharide biosynthesis in digestive organs. The sequence is that of Polypeptide N-acetylgalactosaminyltransferase 12 (Galnt12) from Mus musculus (Mouse).